The following is a 467-amino-acid chain: Cysteine--tRNA ligase (467 aa).

A Zn(2+)-binding site is contributed by C28. The 'HIGH' region motif lies at 30 to 40 (PTVYNYIHVGN). Zn(2+) is bound by residues C212, H237, and E241. The 'KMSKS' region motif lies at 269-273 (KMSKS). K272 contacts ATP.

This sequence belongs to the class-I aminoacyl-tRNA synthetase family. In terms of assembly, monomer. Zn(2+) is required as a cofactor.

It is found in the cytoplasm. The catalysed reaction is tRNA(Cys) + L-cysteine + ATP = L-cysteinyl-tRNA(Cys) + AMP + diphosphate. This chain is Cysteine--tRNA ligase, found in Oenococcus oeni (strain ATCC BAA-331 / PSU-1).